The following is a 187-amino-acid chain: UPF0301 protein ESA_00394 (187 aa).

Belongs to the UPF0301 (AlgH) family.

This chain is UPF0301 protein ESA_00394, found in Cronobacter sakazakii (strain ATCC BAA-894) (Enterobacter sakazakii).